A 732-amino-acid chain; its full sequence is Prolyl tripeptidyl peptidase (732 aa).

Residues 1 to 24 form the signal peptide; sequence MKKTIFQQLFLSVCALTVALPCSA. Active-site charge relay system residues include Ser603, Asp678, and His710.

Belongs to the peptidase S9B family.

It catalyses the reaction Hydrolysis of Xaa-Xaa-Pro-|-Yaa- releasing the N-terminal tripeptide of a peptide with Pro as the third residue (position P1) and where Yaa is not proline.. Functionally, serine proteinase. Releases tripeptides from the free amino terminus of proteins. Has a requirement for Pro in the P1 position, but is inactivated by Pro in the P1' position. The sequence is that of Prolyl tripeptidyl peptidase from Porphyromonas gingivalis (strain ATCC 33277 / DSM 20709 / CIP 103683 / JCM 12257 / NCTC 11834 / 2561).